The primary structure comprises 89 residues: Cytochrome b (89 aa).

Transmembrane regions (helical) follow at residues 38–58 (FGPL…FLAM) and 82–89 (WLLRYMHA). Histidine 88 provides a ligand contact to heme b.

Belongs to the cytochrome b family. As to quaternary structure, the main subunits of complex b-c1 are: cytochrome b, cytochrome c1 and the Rieske protein. Heme b is required as a cofactor.

The protein resides in the mitochondrion inner membrane. Component of the ubiquinol-cytochrome c reductase complex (complex III or cytochrome b-c1 complex) that is part of the mitochondrial respiratory chain. The b-c1 complex mediates electron transfer from ubiquinol to cytochrome c. Contributes to the generation of a proton gradient across the mitochondrial membrane that is then used for ATP synthesis. The protein is Cytochrome b (MT-CYB) of Brassica napus (Rape).